We begin with the raw amino-acid sequence, 247 residues long: Pyridoxine 5'-phosphate synthase (247 aa).

Position 12 (Asn12) interacts with 3-amino-2-oxopropyl phosphate. 1-deoxy-D-xylulose 5-phosphate is bound at residue 14 to 15; the sequence is DH. Arg23 serves as a coordination point for 3-amino-2-oxopropyl phosphate. The active-site Proton acceptor is the His48. Arg50 and His55 together coordinate 1-deoxy-D-xylulose 5-phosphate. The active-site Proton acceptor is Glu75. A 1-deoxy-D-xylulose 5-phosphate-binding site is contributed by Thr105. His196 functions as the Proton donor in the catalytic mechanism. 3-amino-2-oxopropyl phosphate contacts are provided by residues Gly197 and 218-219; that span reads GH.

The protein belongs to the PNP synthase family. In terms of assembly, homooctamer; tetramer of dimers.

It is found in the cytoplasm. It catalyses the reaction 3-amino-2-oxopropyl phosphate + 1-deoxy-D-xylulose 5-phosphate = pyridoxine 5'-phosphate + phosphate + 2 H2O + H(+). Its pathway is cofactor biosynthesis; pyridoxine 5'-phosphate biosynthesis; pyridoxine 5'-phosphate from D-erythrose 4-phosphate: step 5/5. In terms of biological role, catalyzes the complicated ring closure reaction between the two acyclic compounds 1-deoxy-D-xylulose-5-phosphate (DXP) and 3-amino-2-oxopropyl phosphate (1-amino-acetone-3-phosphate or AAP) to form pyridoxine 5'-phosphate (PNP) and inorganic phosphate. In Pseudomonas fluorescens (strain SBW25), this protein is Pyridoxine 5'-phosphate synthase.